Reading from the N-terminus, the 205-residue chain is Probable GTP-binding protein EngB (205 aa).

One can recognise an EngB-type G domain in the interval 22-198; sequence HLPEYAFIGR…LSYIDEVNQD (177 aa). GTP contacts are provided by residues 30 to 37, 57 to 61, 75 to 78, 142 to 145, and 177 to 179; these read GRSNVGKS, GKTQL, DLPG, TKAD, and TSA. Mg(2+) contacts are provided by S37 and T59.

Belongs to the TRAFAC class TrmE-Era-EngA-EngB-Septin-like GTPase superfamily. EngB GTPase family. Requires Mg(2+) as cofactor.

In terms of biological role, necessary for normal cell division and for the maintenance of normal septation. The protein is Probable GTP-binding protein EngB of Flavobacterium psychrophilum (strain ATCC 49511 / DSM 21280 / CIP 103535 / JIP02/86).